We begin with the raw amino-acid sequence, 278 residues long: HTH-type transcriptional activator RhaS (278 aa).

In terms of domain architecture, HTH araC/xylS-type spans 174–272 (NQLMAWLEDH…NWSPRDIRQG (99 aa)). DNA-binding regions (H-T-H motif) lie at residues 191-212 (EAVAEQFSLSLRTLHRQLKQHT) and 239-262 (VTEIAYRCGFGDSNHFSTLFRREF).

As to quaternary structure, binds DNA as a dimer.

The protein resides in the cytoplasm. In terms of biological role, activates expression of the rhaBAD and rhaT operons. The sequence is that of HTH-type transcriptional activator RhaS from Salmonella paratyphi A (strain ATCC 9150 / SARB42).